A 272-amino-acid chain; its full sequence is Sordarin/hypoxysordarin biosynthesis cluster protein P (272 aa).

N-linked (GlcNAc...) asparagine glycosylation is found at Asn6 and Asn23. 2 helical membrane-spanning segments follow: residues 31–51 (FLAS…LLFL) and 67–87 (AYHM…VDLA). Asn208 carries an N-linked (GlcNAc...) asparagine glycan.

It is found in the membrane. It participates in antibiotic biosynthesis. In terms of biological role, part of the gene cluster that mediates the biosynthesis of sordarin and hypoxysordarin, glycoside antibiotics with a unique tetracyclic diterpene aglycone structure. First, the geranylgeranyl diphosphate synthase sdnC constructs GGDP from farnesyl diphosphate and isopentenyl diphosphate. The diterpene cyclase sdnA then catalyzes the cyclization of GGDP to afford cycloaraneosene. Cycloaraneosene is then hydroxylated four times by the putative cytochrome P450 monooxygenases sdnB, sdnE, sdnF and sdnH to give a hydroxylated cycloaraneosene derivative such as cycloaraneosene-8,9,13,19-tetraol. Although the order of the hydroxylations is unclear, at least C8, C9 and C13 of the cycloaraneosene skeleton are hydroxylated before the sordaricin formation. Dehydration of the 13-hydroxy group of the hydroxylated cycloaraneosene derivative might be catalyzed by an unassigned hypothetical protein such as sdnG and sdnP to construct the cyclopentadiene moiety. The FAD-dependent oxidoreductase sdnN is proposed to catalyze the oxidation at C9 of the hydroxylated cycloaraneosene derivative and also catalyze the Baeyer-Villiger oxidation to give the lactone intermediate. The presumed lactone intermediate would be hydrolyzed to give an acrolein moiety and a carboxylate moiety. Then, [4+2]cycloaddition would occur between the acrolein moiety and the cyclopentadiene moiety to give sordaricin. SdnN might also be involved in the [4+2]cycloaddition after the hypothesized oxidation to accommodate the oxidized product and prompt the [4+2]cycloaddition. GDP-6-deoxy-D-altrose may be biosynthesized from GDP-D-mannose by the putative GDP-mannose-4,6-dehydratase sdnI and the short-chain dehydrogenase sdnK. The glycosyltransferase sdnJ catalyzes the attachment of 6-deoxy-D-altrose onto the 19-hydroxy group of sordaricin to give 4'-O-demethylsordarin. The methyltransferase sdnD would complete the biosynthesis of sordarin. Sordarin can be further modified into hypoxysordarin. The unique acyl chain at the 3'-hydroxy group of hypoxysordarin would be constructed by an iterative type I PKS sdnO and the trans-acting polyketide methyltransferase sdnL. SdnL would be responsible for the introduction of an alpha-methyl group of the polyketide chain. Alternatively, the beta-lactamase-like protein sdnR might be responsible for the cleavage and transfer of the polyketide chain from the PKS sdnO to sordarin. Two putative cytochrome P450 monooxygenases, sdnQ and sdnT, might catalyze the epoxidations of the polyketide chain to complete the biosynthesis of hypoxysordarin. Transcriptional regulators sdnM and sdnS are presumably encoded for the transcriptional regulation of the expression of the sdn gene cluster. The protein is Sordarin/hypoxysordarin biosynthesis cluster protein P of Sordaria araneosa (Pleurage araneosa).